The primary structure comprises 155 residues: 17.6 kDa class I heat shock protein 1 (155 aa).

Positions 39–154 constitute a sHSP domain; that stretch reads SSSAIANARV…KAQVKSIDIS (116 aa).

Belongs to the small heat shock protein (HSP20) family. Forms oligomeric structures. Binds to AKR2A.

It localises to the cytoplasm. Functionally, possesses chaperone activity. This is 17.6 kDa class I heat shock protein 1 (HSP17.6A) from Arabidopsis thaliana (Mouse-ear cress).